We begin with the raw amino-acid sequence, 421 residues long: ATP-dependent RNA helicase RhlB (421 aa).

A Q motif motif is present at residues 9 to 37 (QKFSDFALHPAVIEALEKKGFHNCTPIQA). Residues 40–219 (LPLTLEGRDV…FEQMNNAEYV (180 aa)) enclose the Helicase ATP-binding domain. 53-60 (AQTGTGKT) lines the ATP pocket. The DEAD box motif lies at 165-168 (DEAD). The region spanning 245-390 (RLLQTLLEEE…VSKYNPDALM (146 aa)) is the Helicase C-terminal domain. The tract at residues 396–421 (PLRLTRARPGNGPRRNGPPRNRRRSG) is disordered. Low complexity predominate over residues 403–414 (RPGNGPRRNGPP).

The protein belongs to the DEAD box helicase family. RhlB subfamily. Component of the RNA degradosome, which is a multiprotein complex involved in RNA processing and mRNA degradation.

Its subcellular location is the cytoplasm. The catalysed reaction is ATP + H2O = ADP + phosphate + H(+). In terms of biological role, DEAD-box RNA helicase involved in RNA degradation. Has RNA-dependent ATPase activity and unwinds double-stranded RNA. In Klebsiella pneumoniae (strain 342), this protein is ATP-dependent RNA helicase RhlB.